We begin with the raw amino-acid sequence, 170 residues long: ATP synthase F(1) complex subunit delta, mitochondrial (170 aa).

Residues 1 to 33 constitute a mitochondrion transit peptide; that stretch reads MIRSIIKSSNNLLKSNVAINSNKRFFATEASAT.

This sequence belongs to the ATPase epsilon chain family. As to quaternary structure, component of the ATP synthase complex composed at least of ATP5F1A/subunit alpha, ATP5F1B/subunit beta, ATP5MC1/subunit c (homooctomer), MT-ATP6/subunit a, MT-ATP8/subunit 8, ATP5ME/subunit e, ATP5MF/subunit f, ATP5MG/subunit g, ATP5MK/subunit k, ATP5MJ/subunit j, ATP5F1C/subunit gamma, ATP5F1D/subunit delta, ATP5F1E/subunit epsilon, ATP5PF/subunit F6, ATP5PB/subunit b, ATP5PD/subunit d, ATP5PO/subunit OSCP. ATP synthase complex consists of a soluble F(1) head domain (subunits alpha(3) and beta(3)) - the catalytic core - and a membrane F(0) domain - the membrane proton channel (subunits c, a, 8, e, f, g, k and j). These two domains are linked by a central stalk (subunits gamma, delta, and epsilon) rotating inside the F1 region and a stationary peripheral stalk (subunits F6, b, d, and OSCP).

Its subcellular location is the mitochondrion. It localises to the mitochondrion inner membrane. Functionally, subunit delta, of the mitochondrial membrane ATP synthase complex (F(1)F(0) ATP synthase or Complex V) that produces ATP from ADP in the presence of a proton gradient across the membrane which is generated by electron transport complexes of the respiratory chain. ATP synthase complex consist of a soluble F(1) head domain - the catalytic core - and a membrane F(1) domain - the membrane proton channel. These two domains are linked by a central stalk rotating inside the F(1) region and a stationary peripheral stalk. During catalysis, ATP synthesis in the catalytic domain of F(1) is coupled via a rotary mechanism of the central stalk subunits to proton translocation. In vivo, can only synthesize ATP although its ATP hydrolase activity can be activated artificially in vitro. With the central stalk subunit gamma, is essential for the biogenesis of F(1) catalytic part of the ATP synthase complex namely in the formation of F1 assembly intermediate. In Dictyostelium discoideum (Social amoeba), this protein is ATP synthase F(1) complex subunit delta, mitochondrial.